A 598-amino-acid chain; its full sequence is Elongation factor 4 (598 aa).

The tr-type G domain maps to 2 to 184 (KNIRNFSIIA…EIVHKIPAPE (183 aa)). Residues 14–19 (DHGKST) and 131–134 (NKID) contribute to the GTP site.

The protein belongs to the TRAFAC class translation factor GTPase superfamily. Classic translation factor GTPase family. LepA subfamily.

The protein localises to the cell inner membrane. The catalysed reaction is GTP + H2O = GDP + phosphate + H(+). Required for accurate and efficient protein synthesis under certain stress conditions. May act as a fidelity factor of the translation reaction, by catalyzing a one-codon backward translocation of tRNAs on improperly translocated ribosomes. Back-translocation proceeds from a post-translocation (POST) complex to a pre-translocation (PRE) complex, thus giving elongation factor G a second chance to translocate the tRNAs correctly. Binds to ribosomes in a GTP-dependent manner. In Pasteurella multocida (strain Pm70), this protein is Elongation factor 4.